The chain runs to 208 residues: GATA transcription factor 29 (208 aa).

Residues 155-208 (GMKKCTNMNCNALNTPMWRRGPLGPKSLCNACGIKFRKEEERKAKRNVVIVLDD) form a GATA-type; atypical zinc finger.

This sequence belongs to the type IV zinc-finger family. Class B subfamily.

Its subcellular location is the nucleus. Its function is as follows. Transcriptional regulator that specifically binds 5'-GATA-3' or 5'-GAT-3' motifs within gene promoters. The sequence is that of GATA transcription factor 29 (GATA29) from Arabidopsis thaliana (Mouse-ear cress).